The sequence spans 1246 residues: Putative helicase L115 (1246 aa).

Positions 1-21 (MSKTITKKVNKKTKKSTKINP) are disordered. Residues 872–1030 (AKFTDGYHGF…YYMLKMLQTG (159 aa)) form the Helicase ATP-binding domain. An ATP-binding site is contributed by 885 to 892 (SDVGSGKT).

The sequence is that of Putative helicase L115 from Acanthamoeba polyphaga (Amoeba).